We begin with the raw amino-acid sequence, 197 residues long: Carnitine operon protein CaiE (197 aa).

The protein belongs to the transferase hexapeptide repeat family.

Its pathway is amine and polyamine metabolism; carnitine metabolism. In terms of biological role, overproduction of CaiE stimulates the activity of CaiB and CaiD. This Citrobacter koseri (strain ATCC BAA-895 / CDC 4225-83 / SGSC4696) protein is Carnitine operon protein CaiE.